We begin with the raw amino-acid sequence, 217 residues long: uncharacterized protein (217 aa).

A disordered region spans residues 1–32; that stretch reads MTLKKHRGKMSEKSNVNKKFTNSTQNNSNWSN. The segment covering 22–32 has biased composition (low complexity); it reads NSTQNNSNWSN.

This is an uncharacterized protein from Acidianus filamentous virus 2 (isolate Italy/Pozzuoli) (AFV-2).